A 610-amino-acid polypeptide reads, in one-letter code: UvrABC system protein C (610 aa).

Positions 16 to 94 (SQPGVYRMYD…IKLYQPRYNV (79 aa)) constitute a GIY-YIG domain. The UVR domain occupies 204-239 (DQVLNQLVARMEQASGDLRFEEAGRLRDQIQAVRRV).

This sequence belongs to the UvrC family. In terms of assembly, interacts with UvrB in an incision complex.

The protein localises to the cytoplasm. The UvrABC repair system catalyzes the recognition and processing of DNA lesions. UvrC both incises the 5' and 3' sides of the lesion. The N-terminal half is responsible for the 3' incision and the C-terminal half is responsible for the 5' incision. The chain is UvrABC system protein C from Erwinia tasmaniensis (strain DSM 17950 / CFBP 7177 / CIP 109463 / NCPPB 4357 / Et1/99).